Reading from the N-terminus, the 257-residue chain is Cobalt transport protein CbiM (257 aa).

A signal peptide spans 1 to 33 (MVKPTQAKRYASLGAIALLTTSLVVASPNPALA). The next 6 membrane-spanning stretches (helical) occupy residues 39–59 (GFLPLGWAVGWWLAFLPFLAW), 74–94 (SVLLVALAGAYAFVVSSLKIP), 117–137 (LMAVLGTLVLLFQSLLIAHGG), 138–158 (LTTLGANAFSMAVVGPWLAWL), 171–191 (AIALFAASFISNVGTYTLTSL), and 214–234 (LFAVTQIPLAISEGLLTVLVW).

It belongs to the CbiM family. As to quaternary structure, forms an energy-coupling factor (ECF) transporter complex composed of an ATP-binding protein (A component, CbiO), a transmembrane protein (T component, CbiQ) and 2 possible substrate-capture proteins (S components, CbiM and CbiN) of unknown stoichimetry.

It localises to the cell inner membrane. Its pathway is cofactor biosynthesis; adenosylcobalamin biosynthesis. Part of the energy-coupling factor (ECF) transporter complex CbiMNOQ involved in cobalt import. This is Cobalt transport protein CbiM from Thermosynechococcus vestitus (strain NIES-2133 / IAM M-273 / BP-1).